The sequence spans 393 residues: Probable acetyl-CoA acyltransferase (393 aa).

The Acyl-thioester intermediate role is filled by Cys88. Residues His349 and Cys378 each act as proton acceptor in the active site.

The protein belongs to the thiolase-like superfamily. Thiolase family.

Its subcellular location is the cytoplasm. It catalyses the reaction 2 acetyl-CoA = acetoacetyl-CoA + CoA. The sequence is that of Probable acetyl-CoA acyltransferase from Staphylococcus aureus (strain bovine RF122 / ET3-1).